Reading from the N-terminus, the 306-residue chain is Protein-L-isoaspartate O-methyltransferase 2 (306 aa).

Positions 1–82 are disordered; it reads MSTTPPRNKF…ASAATAGGGG (82 aa). Over residues 38-48 the composition is skewed to pro residues; that stretch reads PAAPTPAPAKP. The segment covering 54-77 has biased composition (low complexity); it reads PRTAAPAPAPVPASAVEQRASAAT. Serine 142 is an active-site residue.

This sequence belongs to the methyltransferase superfamily. L-isoaspartyl/D-aspartyl protein methyltransferase family.

It is found in the cytoplasm. It catalyses the reaction [protein]-L-isoaspartate + S-adenosyl-L-methionine = [protein]-L-isoaspartate alpha-methyl ester + S-adenosyl-L-homocysteine. Catalyzes the methyl esterification of L-isoaspartyl residues in peptides and proteins that result from spontaneous decomposition of normal L-aspartyl and L-asparaginyl residues. It plays a role in the repair and/or degradation of damaged proteins. The protein is Protein-L-isoaspartate O-methyltransferase 2 of Cupriavidus necator (strain ATCC 17699 / DSM 428 / KCTC 22496 / NCIMB 10442 / H16 / Stanier 337) (Ralstonia eutropha).